We begin with the raw amino-acid sequence, 98 residues long: SPbeta prophage-derived uncharacterized protein YorB (98 aa).

In Bacillus subtilis (strain 168), this protein is SPbeta prophage-derived uncharacterized protein YorB (yorB).